Reading from the N-terminus, the 92-residue chain is PqqA binding protein (92 aa).

This sequence belongs to the PqqD family. In terms of assembly, monomer. Interacts with PqqE.

The protein operates within cofactor biosynthesis; pyrroloquinoline quinone biosynthesis. Functionally, functions as a PqqA binding protein and presents PqqA to PqqE, in the pyrroloquinoline quinone (PQQ) biosynthetic pathway. The protein is PqqA binding protein of Klebsiella pneumoniae (strain 342).